Here is a 631-residue protein sequence, read N- to C-terminus: Phosphomethylpyrimidine synthase (631 aa).

Substrate is bound by residues Asn-239, Met-268, Tyr-297, His-333, 353–355 (SRG), 394–397 (DGLR), and Glu-433. His-437 lines the Zn(2+) pocket. Tyr-460 contributes to the substrate binding site. Zn(2+) is bound at residue His-501. [4Fe-4S] cluster-binding residues include Cys-581, Cys-584, and Cys-589.

The protein belongs to the ThiC family. Homodimer. The cofactor is [4Fe-4S] cluster.

It carries out the reaction 5-amino-1-(5-phospho-beta-D-ribosyl)imidazole + S-adenosyl-L-methionine = 4-amino-2-methyl-5-(phosphooxymethyl)pyrimidine + CO + 5'-deoxyadenosine + formate + L-methionine + 3 H(+). It functions in the pathway cofactor biosynthesis; thiamine diphosphate biosynthesis. Its function is as follows. Catalyzes the synthesis of the hydroxymethylpyrimidine phosphate (HMP-P) moiety of thiamine from aminoimidazole ribotide (AIR) in a radical S-adenosyl-L-methionine (SAM)-dependent reaction. This chain is Phosphomethylpyrimidine synthase, found in Escherichia fergusonii (strain ATCC 35469 / DSM 13698 / CCUG 18766 / IAM 14443 / JCM 21226 / LMG 7866 / NBRC 102419 / NCTC 12128 / CDC 0568-73).